Consider the following 350-residue polypeptide: GDSL esterase/lipase At4g10955 (350 aa).

Belongs to the 'GDSL' lipolytic enzyme family.

The polypeptide is GDSL esterase/lipase At4g10955 (Arabidopsis thaliana (Mouse-ear cress)).